The chain runs to 270 residues: Glucosamine-6-phosphate deaminase (270 aa).

The Proton acceptor; for enolization step role is filled by D68. The active-site For ring-opening step is D145. H147 functions as the Proton acceptor; for ring-opening step in the catalytic mechanism. The active-site For ring-opening step is the E152.

It belongs to the glucosamine/galactosamine-6-phosphate isomerase family. NagB subfamily.

It catalyses the reaction alpha-D-glucosamine 6-phosphate + H2O = beta-D-fructose 6-phosphate + NH4(+). Its pathway is amino-sugar metabolism; N-acetylneuraminate degradation; D-fructose 6-phosphate from N-acetylneuraminate: step 5/5. Functionally, catalyzes the reversible isomerization-deamination of glucosamine 6-phosphate (GlcN6P) to form fructose 6-phosphate (Fru6P) and ammonium ion. In Bifidobacterium longum (strain NCC 2705), this protein is Glucosamine-6-phosphate deaminase.